We begin with the raw amino-acid sequence, 337 residues long: Integrase/recombinase (337 aa).

The Core-binding (CB) domain occupies 14 to 94 (VKVLDQLRER…ALLFFYGKVL (81 aa)). One can recognise a Tyr recombinase domain in the interval 112 to 328 (RLPVVLTPDE…GGAGVRSPLD (217 aa)). Residues Arg-146, Lys-171, His-277, Arg-280, and His-303 contribute to the active site. The active-site O-(3'-phospho-DNA)-tyrosine intermediate is the Tyr-312.

The protein belongs to the 'phage' integrase family.

Its function is as follows. Putative integrase believed to be involved in the insertion of antibiotic resistance genes into plasmids and transposons. This chain is Integrase/recombinase (int), found in Escherichia coli.